Consider the following 549-residue polypeptide: Glucose-6-phosphate isomerase (549 aa).

Glu-355 serves as the catalytic Proton donor. Active-site residues include His-386 and Lys-514.

Belongs to the GPI family.

Its subcellular location is the cytoplasm. It carries out the reaction alpha-D-glucose 6-phosphate = beta-D-fructose 6-phosphate. Its pathway is carbohydrate biosynthesis; gluconeogenesis. It functions in the pathway carbohydrate degradation; glycolysis; D-glyceraldehyde 3-phosphate and glycerone phosphate from D-glucose: step 2/4. Catalyzes the reversible isomerization of glucose-6-phosphate to fructose-6-phosphate. The sequence is that of Glucose-6-phosphate isomerase from Salmonella choleraesuis (strain SC-B67).